Consider the following 360-residue polypeptide: NAD(P)H-quinone oxidoreductase subunit 1, chloroplastic (360 aa).

Helical transmembrane passes span tryptophan 29–valine 49, isoleucine 96–valine 116, isoleucine 128–methionine 148, alanine 166–leucine 186, isoleucine 204–leucine 224, glycine 255–leucine 277, isoleucine 297–leucine 317, and leucine 333–alanine 353.

The protein belongs to the complex I subunit 1 family. As to quaternary structure, NDH is composed of at least 16 different subunits, 5 of which are encoded in the nucleus.

It is found in the plastid. Its subcellular location is the chloroplast thylakoid membrane. It catalyses the reaction a plastoquinone + NADH + (n+1) H(+)(in) = a plastoquinol + NAD(+) + n H(+)(out). It carries out the reaction a plastoquinone + NADPH + (n+1) H(+)(in) = a plastoquinol + NADP(+) + n H(+)(out). Its function is as follows. NDH shuttles electrons from NAD(P)H:plastoquinone, via FMN and iron-sulfur (Fe-S) centers, to quinones in the photosynthetic chain and possibly in a chloroplast respiratory chain. The immediate electron acceptor for the enzyme in this species is believed to be plastoquinone. Couples the redox reaction to proton translocation, and thus conserves the redox energy in a proton gradient. This chain is NAD(P)H-quinone oxidoreductase subunit 1, chloroplastic, found in Chlorokybus atmophyticus (Soil alga).